Reading from the N-terminus, the 680-residue chain is Methionine--tRNA ligase (680 aa).

Residues 15-25 (PYANGSIHLGH) carry the 'HIGH' region motif. Positions 146, 149, 159, and 162 each coordinate Zn(2+). The short motif at 332 to 336 (KMSKS) is the 'KMSKS' region element. Lys-335 lines the ATP pocket. The tRNA-binding domain occupies 579–680 (DFAKVDMRIA…EGAQPGMRVM (102 aa)).

This sequence belongs to the class-I aminoacyl-tRNA synthetase family. MetG type 1 subfamily. In terms of assembly, homodimer. It depends on Zn(2+) as a cofactor.

The protein resides in the cytoplasm. It carries out the reaction tRNA(Met) + L-methionine + ATP = L-methionyl-tRNA(Met) + AMP + diphosphate. In terms of biological role, is required not only for elongation of protein synthesis but also for the initiation of all mRNA translation through initiator tRNA(fMet) aminoacylation. The chain is Methionine--tRNA ligase from Photobacterium profundum (strain SS9).